A 120-amino-acid chain; its full sequence is UPF0102 protein COXBURSA331_A1934 (120 aa).

This sequence belongs to the UPF0102 family.

This chain is UPF0102 protein COXBURSA331_A1934, found in Coxiella burnetii (strain RSA 331 / Henzerling II).